Consider the following 295-residue polypeptide: Protoheme IX farnesyltransferase (295 aa).

A run of 9 helical transmembrane segments spans residues Val8–Ala28, Tyr35–Phe55, Val84–Ala104, Leu107–Met127, Val132–Ala152, Leu162–Phe182, Ile208–Ala228, Leu233–Val253, and Phe264–Val284.

This sequence belongs to the UbiA prenyltransferase family. Protoheme IX farnesyltransferase subfamily.

It is found in the cell inner membrane. It carries out the reaction heme b + (2E,6E)-farnesyl diphosphate + H2O = Fe(II)-heme o + diphosphate. The protein operates within porphyrin-containing compound metabolism; heme O biosynthesis; heme O from protoheme: step 1/1. Converts heme B (protoheme IX) to heme O by substitution of the vinyl group on carbon 2 of heme B porphyrin ring with a hydroxyethyl farnesyl side group. The polypeptide is Protoheme IX farnesyltransferase (Enterobacter sp. (strain 638)).